The primary structure comprises 195 residues: Penicillin-binding protein activator LpoB (195 aa).

An N-terminal signal peptide occupies residues 1–16; sequence MKKYLFVALAALVLTG. The N-palmitoyl cysteine moiety is linked to residue Cys-17. A lipid anchor (S-diacylglycerol cysteine) is attached at Cys-17. Residues 19-55 form a disordered region; it reads SRPPEPEQPQPPVTVEPVTPPVVEEPQPPVTEPVPQP. Pro residues-rich tracts occupy residues 24 to 38 and 44 to 55; these read PEQP…PVTP and PQPPVTEPVPQP.

This sequence belongs to the LpoB family. As to quaternary structure, interacts with PBP1b.

It localises to the cell outer membrane. Functionally, regulator of peptidoglycan synthesis that is essential for the function of penicillin-binding protein 1B (PBP1b). The protein is Penicillin-binding protein activator LpoB of Serratia proteamaculans (strain 568).